Consider the following 622-residue polypeptide: MSLDISQFPVLAQANTPNELRQLPQALLPQVADELREFLLKSVGMSSGHFASGLGTVELTVALHYVYNTPFDRLIWDVGHQAYPHKILTGRRDKMHTIRQKNGLHPFPWREESEYDTFSVGHSGTSISAALAMAVAAEKEQAGRKVVAVIGDGAMTGGMVFEAMNHAGDLHNDMLVVLNDNEMSISENVGALNNHLAQLMSGRFYTTLREGGKKVLKGMPVIKEMAKRTEEHLKGMVVPGTLFEELGFNYIGPIDGHDVDALVETMRNMRNLKGPQVLHIMTKKGRGYEPAEKDPIGWHAVPKFDPTQFKKPSTTPGLPTFSQVFGKWLCDIAEQDDKVLGITPAMREGSGMVEFSQRFPKQYFDAAIAEQHAVTLGAGFACEGYKPVVAIYSTFLQRGYDQLIHDVALQRLPVLFAIDRGGIVGADGPTHQGAFDLSFMRCIPNMVIMAPSDENECRQMLYTGYCYNAGPSAVRYPRGSATGATQVEAMTALPIGKGVIKRVGKRIALLNFGTTLASALTAADNLDATVVDMRFVKPLDAELVTEMAQTHDILVTVEENAIMGGAGSGVLELLQKLKMPKPVLQIGLPDEFIKHGSPEEVTHDLQLDAEGILAQINAYLAQ.

Residues histidine 80 and 121 to 123 (GHS) each bind thiamine diphosphate. Aspartate 152 provides a ligand contact to Mg(2+). Thiamine diphosphate-binding positions include 153 to 154 (GA), asparagine 181, tyrosine 288, and glutamate 370. Position 181 (asparagine 181) interacts with Mg(2+).

The protein belongs to the transketolase family. DXPS subfamily. In terms of assembly, homodimer. It depends on Mg(2+) as a cofactor. Thiamine diphosphate serves as cofactor.

The enzyme catalyses D-glyceraldehyde 3-phosphate + pyruvate + H(+) = 1-deoxy-D-xylulose 5-phosphate + CO2. The protein operates within metabolic intermediate biosynthesis; 1-deoxy-D-xylulose 5-phosphate biosynthesis; 1-deoxy-D-xylulose 5-phosphate from D-glyceraldehyde 3-phosphate and pyruvate: step 1/1. Catalyzes the acyloin condensation reaction between C atoms 2 and 3 of pyruvate and glyceraldehyde 3-phosphate to yield 1-deoxy-D-xylulose-5-phosphate (DXP). In Shewanella putrefaciens (strain CN-32 / ATCC BAA-453), this protein is 1-deoxy-D-xylulose-5-phosphate synthase.